The chain runs to 185 residues: Thiol:disulfide interchange protein DsbE (185 aa).

Residues 1–4 (MKRN) lie on the Cytoplasmic side of the membrane. A helical membrane pass occupies residues 5–25 (VLLLPLLIFLLIAAALLWQLA). Residues 26–185 (RNAQGDDPTN…WDRYSREAAQ (160 aa)) lie on the Periplasmic side of the membrane. The Thioredoxin domain occupies 39–177 (ALTGKPVPAF…WESELKPLWD (139 aa)). A disulfide bridge connects residues cysteine 80 and cysteine 83.

The protein belongs to the thioredoxin family. DsbE subfamily.

The protein resides in the cell inner membrane. In terms of biological role, involved in disulfide bond formation. Catalyzes a late, reductive step in the assembly of periplasmic c-type cytochromes, probably the reduction of disulfide bonds of the apocytochrome c to allow covalent linkage with the heme. Possible subunit of a heme lyase. The protein is Thiol:disulfide interchange protein DsbE (dsbE1) of Salmonella typhi.